A 322-amino-acid polypeptide reads, in one-letter code: MSYSNLKLFALSSNKELAEKVAKTIGISLGKSTVRQFSDGEIQVNIEESIRGNHVFILQSTSSPVNDNLMEILIMVDALKRASAETVSVVMPYYGYARQDRKARSREPITSKLVANMLAVAGVDRLLTVDLHAAQIQGFFDIPVDHLMGAPLIADYFVRRGMCGSDYVVVSPDHGGVTRARKLAQFLQTPIAIIDKRRNVNKMNTSEVMNIIGNVSGKTCILIDDMIDTAGTIAHAADALAEAGATAVYASCTHPVLSGSALDNIQNSAIEKLVVLDTIDLPEEKLIDKIEQISITDLISEAIIRIHEKRPLSPLFEFTTFN.

Residues 39–41 (DGE) and 98–99 (RQ) each bind ATP. Residues His132 and Asp173 each coordinate Mg(2+). Lys196 is a catalytic residue. Residues Arg198, Asp224, and 228 to 232 (DTAGT) contribute to the D-ribose 5-phosphate site.

This sequence belongs to the ribose-phosphate pyrophosphokinase family. Class I subfamily. In terms of assembly, homohexamer. Mg(2+) is required as a cofactor.

The protein localises to the cytoplasm. It catalyses the reaction D-ribose 5-phosphate + ATP = 5-phospho-alpha-D-ribose 1-diphosphate + AMP + H(+). Its pathway is metabolic intermediate biosynthesis; 5-phospho-alpha-D-ribose 1-diphosphate biosynthesis; 5-phospho-alpha-D-ribose 1-diphosphate from D-ribose 5-phosphate (route I): step 1/1. Functionally, involved in the biosynthesis of the central metabolite phospho-alpha-D-ribosyl-1-pyrophosphate (PRPP) via the transfer of pyrophosphoryl group from ATP to 1-hydroxyl of ribose-5-phosphate (Rib-5-P). This Streptococcus mutans serotype c (strain ATCC 700610 / UA159) protein is Ribose-phosphate pyrophosphokinase 1.